Here is a 191-residue protein sequence, read N- to C-terminus: Thymidine kinase (191 aa).

Residues G9–T16 and D85–Q88 each bind ATP. E86 acts as the Proton acceptor in catalysis. The Zn(2+) site is built by C143, C146, C181, and C184.

Belongs to the thymidine kinase family. As to quaternary structure, homotetramer.

Its subcellular location is the cytoplasm. The enzyme catalyses thymidine + ATP = dTMP + ADP + H(+). The sequence is that of Thymidine kinase from Listeria innocua serovar 6a (strain ATCC BAA-680 / CLIP 11262).